Consider the following 233-residue polypeptide: MKSAVLVFPGINRERDMARALRLVSGREPAMVWHAETSLPEGTDLVVAPGGFSYGDYLRCGAIAARAPVMDAVRAFASDGGLVLGVCNGFQILCESGLLPGILMRNARLKFICHDVHLRVERSDTPFTRGYNAGQVIRVPVAHGEGNYAADEDTIRRLEGEGRVLYRYCSASGEVGDTHNINGAAQSIAGIVNERGNVLGMMPHPENHVEDIMGCTDGRGLFAGLVAHLERAA.

The Glutamine amidotransferase type-1 domain maps to 3-233 (SAVLVFPGIN…GLVAHLERAA (231 aa)). The Nucleophile role is filled by cysteine 87. Residues histidine 204 and glutamate 206 contribute to the active site.

As to quaternary structure, part of the FGAM synthase complex composed of 1 PurL, 1 PurQ and 2 PurS subunits.

It localises to the cytoplasm. It carries out the reaction N(2)-formyl-N(1)-(5-phospho-beta-D-ribosyl)glycinamide + L-glutamine + ATP + H2O = 2-formamido-N(1)-(5-O-phospho-beta-D-ribosyl)acetamidine + L-glutamate + ADP + phosphate + H(+). The enzyme catalyses L-glutamine + H2O = L-glutamate + NH4(+). It functions in the pathway purine metabolism; IMP biosynthesis via de novo pathway; 5-amino-1-(5-phospho-D-ribosyl)imidazole from N(2)-formyl-N(1)-(5-phospho-D-ribosyl)glycinamide: step 1/2. In terms of biological role, part of the phosphoribosylformylglycinamidine synthase complex involved in the purines biosynthetic pathway. Catalyzes the ATP-dependent conversion of formylglycinamide ribonucleotide (FGAR) and glutamine to yield formylglycinamidine ribonucleotide (FGAM) and glutamate. The FGAM synthase complex is composed of three subunits. PurQ produces an ammonia molecule by converting glutamine to glutamate. PurL transfers the ammonia molecule to FGAR to form FGAM in an ATP-dependent manner. PurS interacts with PurQ and PurL and is thought to assist in the transfer of the ammonia molecule from PurQ to PurL. The chain is Phosphoribosylformylglycinamidine synthase subunit PurQ from Nitrobacter winogradskyi (strain ATCC 25391 / DSM 10237 / CIP 104748 / NCIMB 11846 / Nb-255).